A 332-amino-acid chain; its full sequence is Ribosomal RNA small subunit methyltransferase H (332 aa).

S-adenosyl-L-methionine-binding positions include 42 to 44 (GGH), Asp62, Phe86, Asp105, and Gln112.

It belongs to the methyltransferase superfamily. RsmH family.

It is found in the cytoplasm. It carries out the reaction cytidine(1402) in 16S rRNA + S-adenosyl-L-methionine = N(4)-methylcytidine(1402) in 16S rRNA + S-adenosyl-L-homocysteine + H(+). Functionally, specifically methylates the N4 position of cytidine in position 1402 (C1402) of 16S rRNA. In Cupriavidus pinatubonensis (strain JMP 134 / LMG 1197) (Cupriavidus necator (strain JMP 134)), this protein is Ribosomal RNA small subunit methyltransferase H.